Reading from the N-terminus, the 327-residue chain is GTPase Obg (327 aa).

Residues 2-160 (HLFKDSLNLI…LNLRLELSLI (159 aa)) enclose the Obg domain. The region spanning 161-326 (ADIGLVGLPN…LVSEFFSLVK (166 aa)) is the OBG-type G domain. Residues 167-174 (GLPNAGKS), 192-196 (FTTKI), 213-216 (DLPG), 280-283 (SKLD), and 307-309 (SIY) contribute to the GTP site. Mg(2+)-binding residues include serine 174 and threonine 194.

It belongs to the TRAFAC class OBG-HflX-like GTPase superfamily. OBG GTPase family. As to quaternary structure, monomer. Requires Mg(2+) as cofactor.

Its subcellular location is the cytoplasm. An essential GTPase which binds GTP, GDP and possibly (p)ppGpp with moderate affinity, with high nucleotide exchange rates and a fairly low GTP hydrolysis rate. Plays a role in control of the cell cycle, stress response, ribosome biogenesis and in those bacteria that undergo differentiation, in morphogenesis control. The sequence is that of GTPase Obg from Borrelia duttonii (strain Ly).